We begin with the raw amino-acid sequence, 121 residues long: MTSSTPTAPTAQAHGRFIRGSVSKVRRVLDQIRGRTYRDALIMLEFMPYRSTGPITKVLRSAVANAEHNLGLDPSSLVISSATADMGPSMKRYRPRAQGRAYQIKKQTCHISIAVAAQTDS.

It belongs to the universal ribosomal protein uL22 family. Part of the 50S ribosomal subunit.

This protein binds specifically to 23S rRNA; its binding is stimulated by other ribosomal proteins, e.g. L4, L17, and L20. It is important during the early stages of 50S assembly. It makes multiple contacts with different domains of the 23S rRNA in the assembled 50S subunit and ribosome. In terms of biological role, the globular domain of the protein is located near the polypeptide exit tunnel on the outside of the subunit, while an extended beta-hairpin is found that lines the wall of the exit tunnel in the center of the 70S ribosome. The protein is Large ribosomal subunit protein uL22 of Synechococcus sp. (strain CC9605).